The sequence spans 182 residues: Transcription termination/antitermination protein NusG (182 aa).

The 33-residue stretch at 131–163 (VGEQVRIQSGPFANQIGEVQEIEADKFKLTVLV) folds into the KOW domain.

This sequence belongs to the NusG family.

Participates in transcription elongation, termination and antitermination. In Staphylococcus epidermidis (strain ATCC 35984 / DSM 28319 / BCRC 17069 / CCUG 31568 / BM 3577 / RP62A), this protein is Transcription termination/antitermination protein NusG.